Reading from the N-terminus, the 842-residue chain is Elongation factor 2 (842 aa).

One can recognise a tr-type G domain in the interval 17-253 (TNVRNMSVIA…LWGDSYFNPK (237 aa)). Residues 26 to 33 (AHVDHGKS), 158 to 161 (NKVD), and 213 to 215 (SGL) contribute to the GTP site. His-699 is subject to Diphthamide.

It belongs to the TRAFAC class translation factor GTPase superfamily. Classic translation factor GTPase family. EF-G/EF-2 subfamily.

It localises to the cytoplasm. The enzyme catalyses GTP + H2O = GDP + phosphate + H(+). Functionally, catalyzes the GTP-dependent ribosomal translocation step during translation elongation. During this step, the ribosome changes from the pre-translocational (PRE) to the post-translocational (POST) state as the newly formed A-site-bound peptidyl-tRNA and P-site-bound deacylated tRNA move to the P and E sites, respectively. Catalyzes the coordinated movement of the two tRNA molecules, the mRNA and conformational changes in the ribosome. The sequence is that of Elongation factor 2 (EFT1) from Naumovozyma castellii (Yeast).